The following is a 157-amino-acid chain: 3-hydroxyacyl-[acyl-carrier-protein] dehydratase FabZ (157 aa).

Residue His-58 is part of the active site.

The protein belongs to the thioester dehydratase family. FabZ subfamily.

It localises to the cytoplasm. The catalysed reaction is a (3R)-hydroxyacyl-[ACP] = a (2E)-enoyl-[ACP] + H2O. In terms of biological role, involved in unsaturated fatty acids biosynthesis. Catalyzes the dehydration of short chain beta-hydroxyacyl-ACPs and long chain saturated and unsaturated beta-hydroxyacyl-ACPs. The sequence is that of 3-hydroxyacyl-[acyl-carrier-protein] dehydratase FabZ from Brucella abortus biovar 1 (strain 9-941).